Consider the following 544-residue polypeptide: Probable protein kinase UbiB (544 aa).

Residues 123–501 (DFDIKPLASA…KRQQGTGKFL (379 aa)) enclose the Protein kinase domain. Residues 129-137 (LASASIAQV) and Lys152 contribute to the ATP site. Catalysis depends on Asp287, which acts as the Proton acceptor. 2 helical membrane-spanning segments follow: residues 496–516 (GTGK…AIWI) and 519–539 (QLEP…LLSW).

It belongs to the ABC1 family. UbiB subfamily.

Its subcellular location is the cell inner membrane. It participates in cofactor biosynthesis; ubiquinone biosynthesis [regulation]. In terms of biological role, is probably a protein kinase regulator of UbiI activity which is involved in aerobic coenzyme Q (ubiquinone) biosynthesis. This Vibrio cholerae serotype O1 (strain ATCC 39315 / El Tor Inaba N16961) protein is Probable protein kinase UbiB.